A 390-amino-acid polypeptide reads, in one-letter code: Matrix metalloproteinase-23 (390 aa).

Topologically, residues 1–19 are cytoplasmic; sequence MGRGARVPSEAPGAGVERR. Positions 1-78 are excised as a propeptide; the sequence is MGRGARVPSE…PGPLAPRRRR (78 aa). A helical; Signal-anchor for type II membrane protein membrane pass occupies residues 20 to 40; sequence WLGAALVALCLLPALVLLARL. Residues 41-390 lie on the Lumenal side of the membrane; the sequence is GAPAVPAWSA…TYSWRVRVRG (350 aa). Asn-92 and Asn-148 each carry an N-linked (GlcNAc...) asparagine glycan. His-211 is a binding site for Zn(2+). The active site involves Glu-212. Zn(2+)-binding residues include His-215 and His-221. N-linked (GlcNAc...) asparagine glycosylation is present at Asn-232. Residues 255–289 enclose the ShKT domain; the sequence is CLDRLFVCASWARRGFCDARRRLMKRLCPSSCDFC. 3 cysteine pairs are disulfide-bonded: Cys-255/Cys-289, Cys-262/Cys-282, and Cys-271/Cys-286. Residues 295–380 form the Ig-like C2-type domain; it reads PTVATTPPPP…VVRRQQRVLT (86 aa). An N-linked (GlcNAc...) asparagine glycan is attached at Asn-316. Cys-321 and Cys-370 are disulfide-bonded.

It belongs to the peptidase M10A family. It depends on Zn(2+) as a cofactor. N-glycosylated. Post-translationally, proteolytic cleavage might yield an active form. As to expression, predominantly expressed in ovary, testis and prostate.

The protein resides in the endoplasmic reticulum membrane. Its subcellular location is the membrane. With respect to regulation, inhibited by TIMP2. Its function is as follows. Protease. May regulate the surface expression of some potassium channels by retaining them in the endoplasmic reticulum. In Homo sapiens (Human), this protein is Matrix metalloproteinase-23 (MMP23B).